The chain runs to 571 residues: Cilia- and flagella-associated protein 52 (571 aa).

WD repeat units lie at residues 62 to 106 (GHGN…LLAR), 109 to 150 (LHKG…AICG), 156 to 195 (LNVG…RKIW), 288 to 327 (QSQG…ETLI), 330 to 364 (CHFE…TSSN), 366 to 405 (AHRI…QKLE), 410 to 449 (EHKS…RNQM), 451 to 490 (LANT…VIRE), 494 to 533 (SLSG…VTHV), and 536 to 571 (GHSG…PYTS).

It belongs to the CFAP52 family. As to quaternary structure, microtubule inner protein component of sperm flagellar doublet microtubules. Interacts with BRCA2. Interacts with the CCT chaperonin complex. Interacts with HSP70. Interacts with AK8. Interacts with CFAP45. Interacts with DNAI1. Interacts with IQDC.

It is found in the cytoplasm. The protein resides in the cytoskeleton. The protein localises to the cilium axoneme. Its subcellular location is the flagellum axoneme. Its function is as follows. Microtubule inner protein (MIP) part of the dynein-decorated doublet microtubules (DMTs) in cilia axoneme. Important for proper ciliary and flagellar beating. May act in cooperation with CFAP45 and axonemal dynein subunit DNAH11. May play a role in cell growth and/or survival. This chain is Cilia- and flagella-associated protein 52, found in Macaca fascicularis (Crab-eating macaque).